We begin with the raw amino-acid sequence, 95 residues long: MTVKDFIDKLLGRQTSSASTAKQRLQLVLAHDRSDLNPELLAQMRREILEVVARYVEIDIEEGDVSLETEDRMTALVANLPIRRSIQQSPNGGTL.

Belongs to the MinE family.

Its function is as follows. Prevents the cell division inhibition by proteins MinC and MinD at internal division sites while permitting inhibition at polar sites. This ensures cell division at the proper site by restricting the formation of a division septum at the midpoint of the long axis of the cell. In Synechococcus sp. (strain CC9902), this protein is Cell division topological specificity factor.